Reading from the N-terminus, the 179-residue chain is Centromere protein R (179 aa).

Residues 1 to 79 form a disordered region; that stretch reads MSAKRSLKLD…RLSRRGQPQT (79 aa). Polar residues predominate over residues 30–50; that stretch reads NSYSPTTGTCQISPFSSPTSH. A compositionally biased stretch (basic and acidic residues) spans 51–64; that stretch reads NAEDLRNGLSHGDE. An LXXLL motif motif is present at residues 172-176; sequence LQLLL.

The protein localises to the nucleus. It localises to the chromosome. The protein resides in the centromere. It is found in the kinetochore. In terms of biological role, transcription coregulator that can have both coactivator and corepressor functions. Involved in the coactivation of nuclear receptors for retinoid X (RXRs) and thyroid hormone (TRs) in a ligand-dependent fashion. Probable component of a centromeric complex involved in assembly of kinetochore proteins, mitotic progression and chromosome segregation. This Gallus gallus (Chicken) protein is Centromere protein R (CENPR).